Consider the following 335-residue polypeptide: Leukocyte cell-derived chemotaxin 1 (335 aa).

A helical transmembrane segment spans residues 45 to 65 (VVLISGAVLLLLGAIGAFYFW). The BRICHOS domain maps to 104-201 (GSGAEEAVEV…LCGDLPIFWL (98 aa)). Cys131 and Cys193 are oxidised to a cystine. The propeptide occupies 211–214 (RERR). Positions 221–269 (VTTTTTRRLRSGPQGTPAPGRPNNGTRPSVQEDAEPFNPDNPYHQQEGE) are disordered. Thr223 is a glycosylation site (N-linked (GlcNAc...) asparagine; in variant 223-N-E-224). Thr236 carries O-linked (GalNAc...) threonine; partial glycosylation. A glycan (N-linked (GlcNAc...) asparagine) is linked at Asn244. Disulfide bonds link Cys283-Cys287, Cys284-Cys324, Cys294-Cys318, and Cys298-Cys314.

It belongs to the chondromodulin-1 family. In terms of processing, after cleavage, the post-translationally modified ChM-I is secreted as a glycoprotein. Post-translationally, two other smaller nonglycosylated chondromodulin forms (9 kDa and 7 kDa) are found either in developing articular cartilage or in chondrocytes. The 9 kDa form could be processed by an extracellular matrix-associated protease as a metalloproteinase and the 7 kDa form could be processed intracellularly. In terms of tissue distribution, nasal and articular cartilage, and fetal epiphysis.

It localises to the secreted. It is found in the extracellular space. Its subcellular location is the extracellular matrix. The protein resides in the endomembrane system. In terms of biological role, bifunctional growth regulator that stimulates the growth of cultured chondrocytes in the presence of basic fibroblast growth factor (FGF) but inhibits the growth of cultured vascular endothelial cells. May contribute to the rapid growth of cartilage and vascular invasion prior to the replacement of cartilage by bone during endochondral bone development. Inhibits in vitro tube formation and mobilization of endothelial cells. Plays a role as antiangiogenic factor in cardiac valves to suppress neovascularization. The chain is Leukocyte cell-derived chemotaxin 1 from Bos taurus (Bovine).